Reading from the N-terminus, the 394-residue chain is Protein BUR2 (394 aa).

2 disordered regions span residues M1–Q32 and M372–F394. Polar residues predominate over residues I9–Q32. Residues M372–S381 show a composition bias toward basic and acidic residues.

Belongs to the BUR kinase complex.

The protein localises to the nucleus. In terms of biological role, component of the BUR kinase complex involved in transcription regulation. This complex phosphorylates the UBC2/RAD6 ubiquitin-conjugating enzyme (E2), leading to monoubiquitination of histone H2B and the silencing of telomeric-associated genes. Also required for histone H3 methylation. Necessary for the recovery from pheromone-induced growth arrest in the cell cycle G1 phase. The kinase activity of the complex requires the presence of BUR2. Overexpression of BUR2 interferes with mitotic chromosome segregation. This Kluyveromyces lactis (strain ATCC 8585 / CBS 2359 / DSM 70799 / NBRC 1267 / NRRL Y-1140 / WM37) (Yeast) protein is Protein BUR2 (BUR2).